Consider the following 331-residue polypeptide: Probable cytosolic iron-sulfur protein assembly protein Ciao1 (331 aa).

WD repeat units follow at residues 12-51 (GHKG…WTTK), 57-96 (GHKR…ATLE), 97-136 (GHEN…EFEC), 142-181 (AHSQ…SDWD), 188-227 (SHTS…NDAG), 246-285 (EHSR…KRDA), and 297-331 (AHEQ…KLQE).

The protein belongs to the WD repeat CIA1 family.

In terms of biological role, essential component of the cytosolic iron-sulfur (Fe/S) protein assembly machinery. Required for the maturation of extramitochondrial Fe/S proteins. This Drosophila virilis (Fruit fly) protein is Probable cytosolic iron-sulfur protein assembly protein Ciao1.